The sequence spans 556 residues: Arginine--tRNA ligase (556 aa).

The short motif at 132–142 is the 'HIGH' region element; that stretch reads ANPTGDLHLGH.

It belongs to the class-I aminoacyl-tRNA synthetase family. As to quaternary structure, monomer.

The protein localises to the cytoplasm. It catalyses the reaction tRNA(Arg) + L-arginine + ATP = L-arginyl-tRNA(Arg) + AMP + diphosphate. This is Arginine--tRNA ligase from Listeria welshimeri serovar 6b (strain ATCC 35897 / DSM 20650 / CCUG 15529 / CIP 8149 / NCTC 11857 / SLCC 5334 / V8).